The sequence spans 353 residues: UPF0283 membrane protein YcjF (353 aa).

The next 3 helical transmembrane spans lie at 70-90 (MVMGGLALFGASVVGQGVQWT), 100-120 (VALGGCAAGALIIGAGVGSVV), and 213-233 (ESTLMIAVSPLALVDMAFIAW).

It belongs to the UPF0283 family.

It localises to the cell inner membrane. This is UPF0283 membrane protein YcjF from Escherichia coli O139:H28 (strain E24377A / ETEC).